Reading from the N-terminus, the 92-residue chain is Small ribosomal subunit protein bS20 (92 aa).

It belongs to the bacterial ribosomal protein bS20 family.

Its function is as follows. Binds directly to 16S ribosomal RNA. This Magnetococcus marinus (strain ATCC BAA-1437 / JCM 17883 / MC-1) protein is Small ribosomal subunit protein bS20.